A 379-amino-acid polypeptide reads, in one-letter code: Anhydro-N-acetylmuramic acid kinase (379 aa).

12–19 (GTSLDGMD) contacts ATP.

This sequence belongs to the anhydro-N-acetylmuramic acid kinase family.

It catalyses the reaction 1,6-anhydro-N-acetyl-beta-muramate + ATP + H2O = N-acetyl-D-muramate 6-phosphate + ADP + H(+). Its pathway is amino-sugar metabolism; 1,6-anhydro-N-acetylmuramate degradation. It participates in cell wall biogenesis; peptidoglycan recycling. Functionally, catalyzes the specific phosphorylation of 1,6-anhydro-N-acetylmuramic acid (anhMurNAc) with the simultaneous cleavage of the 1,6-anhydro ring, generating MurNAc-6-P. Is required for the utilization of anhMurNAc either imported from the medium or derived from its own cell wall murein, and thus plays a role in cell wall recycling. The chain is Anhydro-N-acetylmuramic acid kinase from Gloeobacter violaceus (strain ATCC 29082 / PCC 7421).